A 251-amino-acid chain; its full sequence is MLAKRIIPCLDVKNGRVVKGVQFEELRDAGSILEQAKFYNDELADELVFLDISASIESRRTTLEEVLKVSEQVFIPLTVGGGINSVERAREAFLHGADKVSVNTSAVKEPTLISELAERFGSQAVVVAIDIKNVGSHYEVFTHSGKTPTGLDTLEWAHKVVELGAGEILLTSMDRDGTQKGYDNVILKEISTSVGVPVIASGGAGNLQHLYEGFSIGMADAALAASIFHFRQHSVREAKAFLQEKGIAIRL.

Residues Asp-11 and Asp-130 contribute to the active site.

The protein belongs to the HisA/HisF family. In terms of assembly, heterodimer of HisH and HisF.

The protein resides in the cytoplasm. It carries out the reaction 5-[(5-phospho-1-deoxy-D-ribulos-1-ylimino)methylamino]-1-(5-phospho-beta-D-ribosyl)imidazole-4-carboxamide + L-glutamine = D-erythro-1-(imidazol-4-yl)glycerol 3-phosphate + 5-amino-1-(5-phospho-beta-D-ribosyl)imidazole-4-carboxamide + L-glutamate + H(+). It functions in the pathway amino-acid biosynthesis; L-histidine biosynthesis; L-histidine from 5-phospho-alpha-D-ribose 1-diphosphate: step 5/9. In terms of biological role, IGPS catalyzes the conversion of PRFAR and glutamine to IGP, AICAR and glutamate. The HisF subunit catalyzes the cyclization activity that produces IGP and AICAR from PRFAR using the ammonia provided by the HisH subunit. The polypeptide is Imidazole glycerol phosphate synthase subunit HisF (Chloroherpeton thalassium (strain ATCC 35110 / GB-78)).